The primary structure comprises 207 residues: Ras-related protein Rab-7a (207 aa).

Position 2 is an N-acetylthreonine (Thr2). Residues Ser17, Gly18, Val19, Gly20, Lys21, Thr22, Ser23, Ser34, Asn35, Tyr37, and Thr40 each coordinate GTP. Thr22 contacts Mg(2+). Positions 28–41 match the Switch 1 motif; it reads YVNKKFSNQYKATI. The Mg(2+) site is built by Thr40 and Asp63. GTP is bound at residue Gly66. The short motif at 67 to 82 is the Switch 2 element; sequence QERFQSLGVAFYRGAD. At Ser72 the chain carries Phosphoserine. GTP is bound by residues Asn125, Lys126, Asp128, Ala156, and Lys157. Glycyl lysine isopeptide (Lys-Gly) (interchain with G-Cter in ubiquitin) cross-links involve residues Lys191 and Lys194. 2 S-geranylgeranyl cysteine lipidation sites follow: Cys205 and Cys207. Position 207 is a cysteine methyl ester (Cys207).

Belongs to the small GTPase superfamily. Rab family. Interacts with NTRK1/TRKA. Interacts with RILP. Interacts with PSMA7. Interacts with RNF115. Interacts with FYCO1. Interacts with the PIK3C3/VPS34-PIK3R4 complex. The GTP-bound form interacts with OSBPL1A. The GTP-bound form interacts with RAC1. Interacts with CLN3. Interacts with CHM, the substrate-binding subunit of the Rab geranylgeranyltransferase complex. Interacts with C9orf72. Does not interact with HPS4 and the BLOC-3 complex (heterodimer of HPS1 and HPS4). Interacts with CLN5. Interacts with PLEKHM1 (via N- and C-terminus). Interacts with PRPH; the interaction is direct. Interacts with VPS13A. The GDP-bound form interacts with RIMOC1. Interacts with the MON1A-CCZ1B complex and this interaction is enhanced in the presence of RIMOC1. Interacts with VPS39 and VPS41. Forms a ternary complex with LAMP2 and RUFY4; the interaction with LAMP2 is mediated by RUFY4 (via RUN and coiled coil domains). Mg(2+) is required as a cofactor. Post-translationally, deubiquitination at Lys-191 and Lys-194 by USP32. Phosphorylated at Ser-72 by LRRK1; phosphorylation is dependent on protein kinase C (PKC) activation of LRRK1. In terms of processing, prenylated. Prenylation is required for association with cellular membranes.

The protein localises to the cytoplasmic vesicle. It is found in the phagosome membrane. It localises to the late endosome membrane. Its subcellular location is the lysosome membrane. The protein resides in the melanosome membrane. The protein localises to the autophagosome membrane. It is found in the lipid droplet. It localises to the endosome membrane. Its subcellular location is the mitochondrion membrane. The catalysed reaction is GTP + H2O = GDP + phosphate + H(+). Its activity is regulated as follows. Regulated by guanine nucleotide exchange factors (GEFs) which promote the exchange of bound GDP for free GTP. Regulated by GTPase activating proteins (GAPs) which increase the GTP hydrolysis activity. Inhibited by GDP dissociation inhibitors (GDIs). Its function is as follows. The small GTPases Rab are key regulators of intracellular membrane trafficking, from the formation of transport vesicles to their fusion with membranes. Rabs cycle between an inactive GDP-bound form and an active GTP-bound form that is able to recruit to membranes different sets of downstream effectors directly responsible for vesicle formation, movement, tethering and fusion. In its active state, RAB7A binds to a variety of effector proteins playing a key role in the regulation of endo-lysosomal trafficking. Governs early-to-late endosomal maturation, microtubule minus-end as well as plus-end directed endosomal migration and positioning, and endosome-lysosome transport through different protein-protein interaction cascades. Also plays a central role in growth-factor-mediated cell signaling, nutrient-transporter-mediated nutrient uptake, neurotrophin transport in the axons of neurons and lipid metabolism. Also involved in regulation of some specialized endosomal membrane trafficking, such as maturation of melanosomes, pathogen-induced phagosomes (or vacuoles) and autophagosomes. Plays a role in the maturation and acidification of phagosomes that engulf pathogens, such as S.aureus and Mycobacteria. Plays a role in the fusion of phagosomes with lysosomes. In concert with RAC1, plays a role in regulating the formation of RBs (ruffled borders) in osteoclasts. Controls the endosomal trafficking and neurite outgrowth signaling of NTRK1/TRKA. Regulates the endocytic trafficking of the EGF-EGFR complex by regulating its lysosomal degradation. Involved in the ADRB2-stimulated lipolysis through lipophagy, a cytosolic lipase-independent autophagic pathway. Required for the exosomal release of SDCBP, CD63 and syndecan. Required for vesicular trafficking and cell surface expression of ACE2. May play a role in PRPH neuronal intermediate filament assembly. The sequence is that of Ras-related protein Rab-7a (RAB7A) from Pongo abelii (Sumatran orangutan).